Reading from the N-terminus, the 547-residue chain is Dihydroxy-acid dehydratase (547 aa).

Aspartate 78 lines the Mg(2+) pocket. Position 119 (cysteine 119) interacts with [2Fe-2S] cluster. Positions 120 and 121 each coordinate Mg(2+). The residue at position 121 (lysine 121) is an N6-carboxylysine. A [2Fe-2S] cluster-binding site is contributed by cysteine 191. Glutamate 439 is a Mg(2+) binding site. Serine 464 functions as the Proton acceptor in the catalytic mechanism.

This sequence belongs to the IlvD/Edd family. As to quaternary structure, homodimer. The cofactor is [2Fe-2S] cluster. Mg(2+) serves as cofactor.

The catalysed reaction is (2R)-2,3-dihydroxy-3-methylbutanoate = 3-methyl-2-oxobutanoate + H2O. It carries out the reaction (2R,3R)-2,3-dihydroxy-3-methylpentanoate = (S)-3-methyl-2-oxopentanoate + H2O. It participates in amino-acid biosynthesis; L-isoleucine biosynthesis; L-isoleucine from 2-oxobutanoate: step 3/4. It functions in the pathway amino-acid biosynthesis; L-valine biosynthesis; L-valine from pyruvate: step 3/4. Its function is as follows. Functions in the biosynthesis of branched-chain amino acids. Catalyzes the dehydration of (2R,3R)-2,3-dihydroxy-3-methylpentanoate (2,3-dihydroxy-3-methylvalerate) into 2-oxo-3-methylpentanoate (2-oxo-3-methylvalerate) and of (2R)-2,3-dihydroxy-3-methylbutanoate (2,3-dihydroxyisovalerate) into 2-oxo-3-methylbutanoate (2-oxoisovalerate), the penultimate precursor to L-isoleucine and L-valine, respectively. In Methanospirillum hungatei JF-1 (strain ATCC 27890 / DSM 864 / NBRC 100397 / JF-1), this protein is Dihydroxy-acid dehydratase.